A 92-amino-acid polypeptide reads, in one-letter code: Neuropeptide F (92 aa).

Positions 1-27 (MSQSRPLALLVVAALVAAAVLVAAAEA) are cleaved as a signal peptide. Positions 28-51 (QQADGNKLEGLADALKYLQELDRY) are excised as a propeptide. The residue at position 60 (F60) is a Phenylalanine amide. The propeptide occupies 64 to 92 (AELRPDVVDDVIPEEMSADKFWRRFARRR).

This sequence belongs to the NPY family. As to expression, widely expressed in the nervous system. Expressed in corpora cardiaca, hypocerebral ganglion, frontal ganglion, protocerebrum, antennal lobe, tritocerebrum and thoracic ganglia. Not detected in corpora allata, pars intercerebralis, circumesophageal connectives, subesophageal ganglion, abdominal ganglion and abdominal perisympathetic organs.

Its subcellular location is the secreted. In terms of biological role, accelerates ovarian maturation in females. The chain is Neuropeptide F from Locusta migratoria (Migratory locust).